Here is a 364-residue protein sequence, read N- to C-terminus: MDRVWADWYEPVPSPPFSPVDPPGPRPTTPVPGSSPPSPASTPTPPKRGRYVVEHPEYGPPPDPEEVRVHGARGPGAFCAAPWRPDTRRLGADVNRLFRGIAVSAADVTGDTRALRRALFDFYAMGYTRQRPSAPCWQALLQLSPEQSAPLRSALRELNERDVYDPRVLSPPVIEGPLFGEECDVDEDDAGSDTTVASEFSFRGSVCEDDGEDEDEEEDGEEEDEDEEGEEEEDEEEEEGDEDGETDVYEEDDEAEDEEDEEDGDDFDGASVGDDDVFEPPEDGSDGEGSGSDDGGDGEDEDEDEDEDEDEDDGEDEEDEEGEDGGEDGEDGEEDEDEDGEGEEGGKDAARRGTRAPTRPAAAP.

Disordered stretches follow at residues 1-73 and 173-364; these read MDRV…HGAR and VIEG…AAAP. Over residues 12–46 the composition is skewed to pro residues; sequence VPSPPFSPVDPPGPRPTTPVPGSSPPSPASTPTPP. 3 stretches are compositionally biased toward acidic residues: residues 181-191, 207-286, and 294-343; these read EECDVDEDDAG, CEDD…DGSD, and DGGD…GEGE. Residues 355-364 show a composition bias toward low complexity; the sequence is RAPTRPAAAP.

This sequence belongs to the herpesviridae ICP22 family.

The polypeptide is Transcriptional regulator ICP22 homolog (RSP40) (Sus scrofa (Pig)).